The primary structure comprises 451 residues: Multidrug export protein MepA (451 aa).

12 helical membrane passes run 26 to 46 (MIGT…IGFL), 54 to 74 (AISL…LFGV), 97 to 117 (SFSI…ALPF), 139 to 159 (LKVM…EQFA), 170 to 190 (IGML…IFGF), 194 to 214 (VVGA…FFII), 245 to 265 (IPAF…NLFL), 282 to 302 (LVQF…PLIA), 318 to 338 (AVIM…FTIG), 355 to 375 (ATFI…GFLF), 397 to 417 (VVII…GVIW), and 418 to 438 (SLLI…YLLR).

The protein belongs to the multi antimicrobial extrusion (MATE) (TC 2.A.66.1) family. MepA subfamily.

It localises to the cell membrane. Its function is as follows. Multidrug resistance efflux protein. The polypeptide is Multidrug export protein MepA (mepA) (Staphylococcus aureus (strain MRSA252)).